The following is a 355-amino-acid chain: Probable dual-specificity RNA methyltransferase RlmN 1 (355 aa).

Catalysis depends on Glu-91, which acts as the Proton acceptor. Positions 99-336 (RADRAAGCLS…THLRRSRGPD (238 aa)) constitute a Radical SAM core domain. A disulfide bridge connects residues Cys-106 and Cys-341. Positions 113, 117, and 120 each coordinate [4Fe-4S] cluster. S-adenosyl-L-methionine is bound by residues 163–164 (GE), Ser-195, 218–220 (SLH), and Asn-294. Cys-341 serves as the catalytic S-methylcysteine intermediate.

Belongs to the radical SAM superfamily. RlmN family. It depends on [4Fe-4S] cluster as a cofactor.

The protein resides in the cytoplasm. It catalyses the reaction adenosine(2503) in 23S rRNA + 2 reduced [2Fe-2S]-[ferredoxin] + 2 S-adenosyl-L-methionine = 2-methyladenosine(2503) in 23S rRNA + 5'-deoxyadenosine + L-methionine + 2 oxidized [2Fe-2S]-[ferredoxin] + S-adenosyl-L-homocysteine. The enzyme catalyses adenosine(37) in tRNA + 2 reduced [2Fe-2S]-[ferredoxin] + 2 S-adenosyl-L-methionine = 2-methyladenosine(37) in tRNA + 5'-deoxyadenosine + L-methionine + 2 oxidized [2Fe-2S]-[ferredoxin] + S-adenosyl-L-homocysteine. Its function is as follows. Specifically methylates position 2 of adenine 2503 in 23S rRNA and position 2 of adenine 37 in tRNAs. This Opitutus terrae (strain DSM 11246 / JCM 15787 / PB90-1) protein is Probable dual-specificity RNA methyltransferase RlmN 1.